A 485-amino-acid chain; its full sequence is Glycogen synthase (485 aa).

Lys20 provides a ligand contact to ADP-alpha-D-glucose.

It belongs to the glycosyltransferase 1 family. Bacterial/plant glycogen synthase subfamily.

It carries out the reaction [(1-&gt;4)-alpha-D-glucosyl](n) + ADP-alpha-D-glucose = [(1-&gt;4)-alpha-D-glucosyl](n+1) + ADP + H(+). The protein operates within glycan biosynthesis; glycogen biosynthesis. In terms of biological role, synthesizes alpha-1,4-glucan chains using ADP-glucose. This chain is Glycogen synthase, found in Vibrio vulnificus (strain CMCP6).